Consider the following 379-residue polypeptide: Putative nickel insertion protein (379 aa).

Belongs to the LarC family.

This chain is Putative nickel insertion protein, found in Methanocaldococcus jannaschii (strain ATCC 43067 / DSM 2661 / JAL-1 / JCM 10045 / NBRC 100440) (Methanococcus jannaschii).